Reading from the N-terminus, the 89-residue chain is Acylphosphatase (89 aa).

In terms of domain architecture, Acylphosphatase-like spans glutamine 3–isoleucine 89. Catalysis depends on residues arginine 18 and asparagine 36.

This sequence belongs to the acylphosphatase family.

It carries out the reaction an acyl phosphate + H2O = a carboxylate + phosphate + H(+). The protein is Acylphosphatase (acyP) of Staphylococcus haemolyticus (strain JCSC1435).